The following is a 353-amino-acid chain: MFWDFKHRIEQSVTNFRETTYEAFSRCKLFLKTLPKTSIFFLTVIILECLLIICFEGYCIGQFRTVELLKNLGIDSLPISLTLFIFACFFILYLCVEALSSKNIIEIIGLLCIHVALFIYSIVQISELAEIQKVFLSKTQSSLNPITLILNRHEAGNEGIYFILEVPKRIKPFLIALPVILGVASVMLGFLAHGMNKAYGWVIYKKIGPELRMRRRYLVYKIYVTLLKIDIYFFLGVTVQYVMVLPEDAVVEFVLTILVLPLTVLILTLSFNSVSSENMFLMMTVQFFYVCGIPYILFKIIRMYTSTQKEYYASSKQMITTFSVITLLLLLFTIAIGFACSHNFKKGLKEYCM.

The next 8 membrane-spanning stretches (helical) occupy residues 39-59 (IFFLTVIILECLLIICFEGYC), 76-96 (SLPISLTLFIFACFFILYLCV), 103-123 (NIIEIIGLLCIHVALFIYSIV), 172-192 (PFLIALPVILGVASVMLGFLA), 226-246 (LLKIDIYFFLGVTVQYVMVLP), 249-269 (AVVEFVLTILVLPLTVLILTL), 281-301 (LMMTVQFFYVCGIPYILFKII), and 318-338 (MITTFSVITLLLLLFTIAIGF).

This sequence belongs to the UPF0658 family.

The protein resides in the golgi apparatus membrane. This Schizosaccharomyces pombe (strain 972 / ATCC 24843) (Fission yeast) protein is UPF0658 Golgi apparatus membrane protein C23H3.04.